Reading from the N-terminus, the 21-residue chain is Outer membrane protein A (21 aa).

A beta stranded membrane pass occupies residues 6-16 (TWYTGAKLGWS).

The protein belongs to the outer membrane OOP (TC 1.B.6) superfamily. OmpA family. In terms of assembly, monomer and homodimer.

The protein resides in the cell outer membrane. Functionally, with TolR probably plays a role in maintaining the position of the peptidoglycan cell wall in the periplasm. Acts as a porin with low permeability that allows slow penetration of small solutes; an internal gate slows down solute passage. In Actinobacillus lignieresii, this protein is Outer membrane protein A.